Reading from the N-terminus, the 500-residue chain is Beta-glucosidase 2 (500 aa).

The signal sequence occupies residues 1–24 (MGAAAAAGFFFVLLFLSVQGGAVG). A beta-D-glucoside-binding residues include Gln44 and His144. The Proton donor role is filled by Glu190. Residues Cys209 and Cys218 are joined by a disulfide bond. The N-linked (GlcNAc...) asparagine glycan is linked to Asn222. Tyr334 and Glu403 together coordinate a beta-D-glucoside. Residue Glu403 is the Nucleophile of the active site. N-linked (GlcNAc...) asparagine glycosylation occurs at Asn410. Residue Trp445 participates in a beta-D-glucoside binding.

It belongs to the glycosyl hydrolase 1 family.

It carries out the reaction Hydrolysis of terminal, non-reducing beta-D-glucosyl residues with release of beta-D-glucose.. The polypeptide is Beta-glucosidase 2 (BGLU2) (Oryza sativa subsp. japonica (Rice)).